The following is a 465-amino-acid chain: ATP synthase subunit beta (465 aa).

ATP is bound at residue 151-158; sequence GGAGVGKT.

This sequence belongs to the ATPase alpha/beta chains family. As to quaternary structure, F-type ATPases have 2 components, CF(1) - the catalytic core - and CF(0) - the membrane proton channel. CF(1) has five subunits: alpha(3), beta(3), gamma(1), delta(1), epsilon(1). CF(0) has four main subunits: a(1), b(1), b'(1) and c(9-12).

Its subcellular location is the cell inner membrane. The catalysed reaction is ATP + H2O + 4 H(+)(in) = ADP + phosphate + 5 H(+)(out). Its function is as follows. Produces ATP from ADP in the presence of a proton gradient across the membrane. The catalytic sites are hosted primarily by the beta subunits. This Chloroherpeton thalassium (strain ATCC 35110 / GB-78) protein is ATP synthase subunit beta.